The following is a 180-amino-acid chain: Molybdopterin synthase catalytic subunit (180 aa).

The segment covering 1–10 (MSSTTPTTEP) has biased composition (polar residues). A disordered region spans residues 1–31 (MSSTTPTTEPDQLPPHLDPQTYPRTTTNPTL). Residues 21–31 (TYPRTTTNPTL) show a composition bias toward low complexity. Residues 131–132 (HR), Lys-147, and 154–156 (KKE) each bind substrate.

Belongs to the MoaE family. MOCS2B subfamily. In terms of assembly, heterotetramer; composed of 2 small (MOCS2A) and 2 large (MOCS2B) subunits.

It is found in the cytoplasm. The enzyme catalyses 2 [molybdopterin-synthase sulfur-carrier protein]-C-terminal-Gly-aminoethanethioate + cyclic pyranopterin phosphate + H2O = molybdopterin + 2 [molybdopterin-synthase sulfur-carrier protein]-C-terminal Gly-Gly + 2 H(+). It participates in cofactor biosynthesis; molybdopterin biosynthesis. Catalytic subunit of the molybdopterin synthase complex, a complex that catalyzes the conversion of precursor Z into molybdopterin. Acts by mediating the incorporation of 2 sulfur atoms from thiocarboxylated MOCS2A into precursor Z to generate a dithiolene group. The chain is Molybdopterin synthase catalytic subunit from Aspergillus niger (strain ATCC MYA-4892 / CBS 513.88 / FGSC A1513).